A 105-amino-acid chain; its full sequence is Cuticle protein AMP4 (105 aa).

Residues 1-21 (DRDAQTLTDERNDQGDGNFRY) are disordered. The Chitin-binding type R&amp;R domain occupies 16-81 (DGNFRYEFET…PSSDLLPVGP (66 aa)).

In terms of tissue distribution, arthrodial membrane.

The sequence is that of Cuticle protein AMP4 from Homarus americanus (American lobster).